Reading from the N-terminus, the 290-residue chain is 33 kDa chaperonin (290 aa).

2 cysteine pairs are disulfide-bonded: Cys-235/Cys-237 and Cys-268/Cys-271.

This sequence belongs to the HSP33 family. Under oxidizing conditions two disulfide bonds are formed involving the reactive cysteines. Under reducing conditions zinc is bound to the reactive cysteines and the protein is inactive.

It localises to the cytoplasm. Its function is as follows. Redox regulated molecular chaperone. Protects both thermally unfolding and oxidatively damaged proteins from irreversible aggregation. Plays an important role in the bacterial defense system toward oxidative stress. This chain is 33 kDa chaperonin, found in Streptococcus pyogenes serotype M4 (strain MGAS10750).